Reading from the N-terminus, the 245-residue chain is 1-(5-phosphoribosyl)-5-[(5-phosphoribosylamino)methylideneamino] imidazole-4-carboxamide isomerase (245 aa).

Catalysis depends on Asp-7, which acts as the Proton acceptor. The active-site Proton donor is Asp-129.

It belongs to the HisA/HisF family.

The protein localises to the cytoplasm. The enzyme catalyses 1-(5-phospho-beta-D-ribosyl)-5-[(5-phospho-beta-D-ribosylamino)methylideneamino]imidazole-4-carboxamide = 5-[(5-phospho-1-deoxy-D-ribulos-1-ylimino)methylamino]-1-(5-phospho-beta-D-ribosyl)imidazole-4-carboxamide. It functions in the pathway amino-acid biosynthesis; L-histidine biosynthesis; L-histidine from 5-phospho-alpha-D-ribose 1-diphosphate: step 4/9. This chain is 1-(5-phosphoribosyl)-5-[(5-phosphoribosylamino)methylideneamino] imidazole-4-carboxamide isomerase, found in Escherichia coli O17:K52:H18 (strain UMN026 / ExPEC).